The chain runs to 749 residues: Phototropin (749 aa).

The PAS 1 domain occupies 7–80; that stretch reads PASQLTKVLA…QKIRDAIKKG (74 aa). FMN contacts are provided by residues 56–61, Arg74, Asn89, Asn99, and Gln120; that span reads NCRFLQ. Cys57 is subject to S-4a-FMN cysteine. A PAC 1 domain is found at 81–135; it reads EACSVRLLNYRKDGTPFWNLLTVTPIKTPDGRVSKFVGVQVDVTSKTEGKALADN. The PAS 2 domain maps to 200 to 273; it reads VALDLATTVE…DQIRAAIKEG (74 aa). The PAC 2 domain maps to 274 to 328; the sequence is SELTVRILNYTKAGKAFWNMFTLAPMRDQDGHARFFVGVQVDVTAQSTSPDKAPV. A Protein kinase domain is found at 404-712; it reads FRRVKQLGAG…ANEIKSHPWF (309 aa). ATP-binding positions include 410–418 and Lys433; that span reads LGAGDVGLV. Asp529 serves as the catalytic Proton acceptor. Disordered stretches follow at residues 563-591 and 729-749; these read KIGG…SSSG and PRRA…FDNY. In terms of domain architecture, AGC-kinase C-terminal spans 713–749; the sequence is KGINWALLRHQQPPYVPRRASKAAGGSSTGGAAFDNY. The span at 734 to 749 shows a compositional bias: low complexity; that stretch reads KAAGGSSTGGAAFDNY.

Belongs to the protein kinase superfamily. AGC Ser/Thr protein kinase family. FMN is required as a cofactor. In terms of processing, autophosphorylated in response to blue light irradiation. Post-translationally, 2 molecules of FMN bind covalently to cysteines after exposure to blue light and are reversed in the dark. In terms of tissue distribution, expressed in gametes, pre-gametes and gametes generated by pre-gametes (at protein level).

It is found in the membrane. It carries out the reaction L-seryl-[protein] + ATP = O-phospho-L-seryl-[protein] + ADP + H(+). The enzyme catalyses L-threonyl-[protein] + ATP = O-phospho-L-threonyl-[protein] + ADP + H(+). Protein kinase that acts as a blue light photoreceptor. Required for non-photochemical quenching (NPQ), a mechanism that converts and dissipates the harmful excess absorbed light energy into heat and protect the photosynthetic apparatus from photo-oxidative damage. Controls the energy-dependent chlorophyll fluorescence quenching (qE) activity of chlorophyll excited states by inducing the expression of the qE effector protein LHCSR3 in high light intensities. This Chlamydomonas reinhardtii (Chlamydomonas smithii) protein is Phototropin.